The chain runs to 410 residues: Argininosuccinate synthase (410 aa).

Residues 13–21 (AYSGGLDTS) and Ala40 contribute to the ATP site. L-citrulline contacts are provided by Tyr91 and Ser96. Gly121 serves as a coordination point for ATP. L-aspartate contacts are provided by Thr123, Asn127, and Asp128. Position 127 (Asn127) interacts with L-citrulline. 5 residues coordinate L-citrulline: Arg131, Ser182, Ser191, Glu267, and Tyr279.

Belongs to the argininosuccinate synthase family. Type 1 subfamily. In terms of assembly, homotetramer.

It is found in the cytoplasm. The catalysed reaction is L-citrulline + L-aspartate + ATP = 2-(N(omega)-L-arginino)succinate + AMP + diphosphate + H(+). It functions in the pathway amino-acid biosynthesis; L-arginine biosynthesis; L-arginine from L-ornithine and carbamoyl phosphate: step 2/3. The protein is Argininosuccinate synthase of Gluconobacter oxydans (strain 621H) (Gluconobacter suboxydans).